The chain runs to 277 residues: Tryptophan synthase alpha chain (277 aa).

Active-site proton acceptor residues include Glu-50 and Asp-61.

It belongs to the TrpA family. As to quaternary structure, tetramer of two alpha and two beta chains.

It carries out the reaction (1S,2R)-1-C-(indol-3-yl)glycerol 3-phosphate + L-serine = D-glyceraldehyde 3-phosphate + L-tryptophan + H2O. It participates in amino-acid biosynthesis; L-tryptophan biosynthesis; L-tryptophan from chorismate: step 5/5. Its function is as follows. The alpha subunit is responsible for the aldol cleavage of indoleglycerol phosphate to indole and glyceraldehyde 3-phosphate. The chain is Tryptophan synthase alpha chain from Beijerinckia indica subsp. indica (strain ATCC 9039 / DSM 1715 / NCIMB 8712).